Here is a 338-residue protein sequence, read N- to C-terminus: MKVYYDKDADLSIIRDKKVAIIGYGSQGHAHAQNLKESGVDVIVGLRKDGASWKKAEAAGHTVKEVGEAVKTADVVMILLPDETQPDVYRNDIAPNLKKGAALAFAHGFNIHYNQIVPPADIDVIMIAPKGPGHTVRSEFLKGGGVPSLIAVYQDHSGRARDVALSYAAANGGTKGGVIETSFREETETDLFGEQAVLCGGAVELVKAGFETLTEAGYAPEMAYFECLHELKLIVDLMYEGGIANMNYSISNNAEYGEYVTGPEVITAASKEAMKKALYRIQSGEYAKMFILEGKTNYPSMTARRRLTADHPIEKVGAELRAMMPWIAKNKLVDQSKN.

A KARI N-terminal Rossmann domain is found at 1-181; sequence MKVYYDKDAD…GGTKGGVIET (181 aa). NADP(+) is bound by residues 24–27, arginine 47, serine 52, and 82–85; these read YGSQ and DETQ. Residue histidine 107 is part of the active site. Residue glycine 133 participates in NADP(+) binding. The KARI C-terminal knotted domain maps to 182–327; that stretch reads SFREETETDL…AELRAMMPWI (146 aa). Residues aspartate 190, glutamate 194, glutamate 226, and glutamate 230 each coordinate Mg(2+). Residue serine 251 participates in substrate binding.

Belongs to the ketol-acid reductoisomerase family. It depends on Mg(2+) as a cofactor.

The catalysed reaction is (2R)-2,3-dihydroxy-3-methylbutanoate + NADP(+) = (2S)-2-acetolactate + NADPH + H(+). The enzyme catalyses (2R,3R)-2,3-dihydroxy-3-methylpentanoate + NADP(+) = (S)-2-ethyl-2-hydroxy-3-oxobutanoate + NADPH + H(+). It functions in the pathway amino-acid biosynthesis; L-isoleucine biosynthesis; L-isoleucine from 2-oxobutanoate: step 2/4. The protein operates within amino-acid biosynthesis; L-valine biosynthesis; L-valine from pyruvate: step 2/4. Its function is as follows. Involved in the biosynthesis of branched-chain amino acids (BCAA). Catalyzes an alkyl-migration followed by a ketol-acid reduction of (S)-2-acetolactate (S2AL) to yield (R)-2,3-dihydroxy-isovalerate. In the isomerase reaction, S2AL is rearranged via a Mg-dependent methyl migration to produce 3-hydroxy-3-methyl-2-ketobutyrate (HMKB). In the reductase reaction, this 2-ketoacid undergoes a metal-dependent reduction by NADPH to yield (R)-2,3-dihydroxy-isovalerate. The sequence is that of Ketol-acid reductoisomerase (NADP(+)) from Laribacter hongkongensis (strain HLHK9).